The sequence spans 241 residues: Endodeoxyribonuclease NucC (241 aa).

Active-site residues include D73, E104, and K106. 2 residues coordinate Mg(2+): D73 and E104.

This sequence belongs to the NucC endonuclease family. Self-oligomerizes. Forms homotrimers; in the presence of cAAA the trimers associate face-to-face to form homohexamers. The 2 cAAA-binding sites are on the exterior of the hexamer at the three-way junction, there are maximally 2 cyclic nucleotides per hexamer. Mg(2+) is required as a cofactor.

Its activity is regulated as follows. Activated by cAAA and to a lesser extent cAA and cAAG; cAAA and cAA are products of its cognate CD-NTase. Cyclic nucleotide binding causes hexamerization. Cyclic nucleotide binding causes a series of shifts that enclose the cAAA molecule, enable hexamer formation and juxtapose pairs of active sites to allow dsDNA cleavage. Effector DNase of a CBASS antivirus system. CBASS (cyclic oligonucleotide-based antiphage signaling system) provides immunity against bacteriophage. The CD-NTase protein synthesizes cyclic nucleotides in response to infection; these serve as specific second messenger signals. The signals activate a diverse range of effectors, leading to bacterial cell death and thus abortive phage infection. A type III-C(AAA) CBASS system. Functionally, a cyclic nucleotide-activated dsDNase. In the presence of 3',3',3'-cyclic AMP-AMP-AMP (cAAA), and to a lesser extent 3',3',3'-cyclic AMP-AMP-GMP (cAAG) and cyclic-di-AMP (c-di-AMP), endonucleolytically degrades dsDNA. Binds one cAAA in a pocket on one surface of the trimer; cAAA binding promotes hexamerization, which is necessary for nuclease activation. Also binds c-diAMP or linear di-AMP with lower affinity. The nuclease digests dsDNA to about 50 bp lengths with a 2-base 3' overhang and a consensus recognition site of 5'-Axx|T-3'. DNA has been modeled to contact a pair of juxtaposed active sites (one from each layer of the hexamer), accounting for cleavage on both strands and the 2-base overhang. Its function is as follows. Protects E.coli strain JP313 against bacteriophage lambda cI- infection. When the cdnC-cap7-cap6-nucC operon is transformed into a susceptible strain it confers bacteriophage immunity. Mutations in the sensor (Cap7 also called HORMA) or effector proteins (CdnC, NucC) but not the disassembly protein (Cap6 also called Trip13) no longer confer immunity. The presence of the intact operon leads to culture collapse and cell death which occurs before the phage has finished its replication cycle, thus protecting non-infected bacteria by aborting the phage infection and preventing its propagation. In Escherichia coli (strain MS 115-1), this protein is Endodeoxyribonuclease NucC.